Reading from the N-terminus, the 437-residue chain is Glutamate-1-semialdehyde 2,1-aminomutase (437 aa).

Lysine 279 is subject to N6-(pyridoxal phosphate)lysine.

It belongs to the class-III pyridoxal-phosphate-dependent aminotransferase family. HemL subfamily. In terms of assembly, homodimer. Pyridoxal 5'-phosphate serves as cofactor.

It is found in the cytoplasm. The catalysed reaction is (S)-4-amino-5-oxopentanoate = 5-aminolevulinate. Its pathway is porphyrin-containing compound metabolism; protoporphyrin-IX biosynthesis; 5-aminolevulinate from L-glutamyl-tRNA(Glu): step 2/2. This is Glutamate-1-semialdehyde 2,1-aminomutase from Sorangium cellulosum (strain So ce56) (Polyangium cellulosum (strain So ce56)).